The chain runs to 269 residues: Cytochrome c oxidase subunit 3 (269 aa).

A run of 7 helical transmembrane segments spans residues Pro19–Leu39, His44–Phe64, Ile87–Phe107, Leu135–Ala155, Gly170–Trp190, Phe205–Ala225, and Ile247–Trp267.

Belongs to the cytochrome c oxidase subunit 3 family. In terms of assembly, component of the cytochrome c oxidase (complex IV, CIV), a multisubunit enzyme composed of a catalytic core of 3 subunits and several supernumerary subunits. The complex exists as a monomer or a dimer and forms supercomplexes (SCs) in the inner mitochondrial membrane with ubiquinol-cytochrome c oxidoreductase (cytochrome b-c1 complex, complex III, CIII).

It is found in the mitochondrion inner membrane. The catalysed reaction is 4 Fe(II)-[cytochrome c] + O2 + 8 H(+)(in) = 4 Fe(III)-[cytochrome c] + 2 H2O + 4 H(+)(out). Component of the cytochrome c oxidase, the last enzyme in the mitochondrial electron transport chain which drives oxidative phosphorylation. The respiratory chain contains 3 multisubunit complexes succinate dehydrogenase (complex II, CII), ubiquinol-cytochrome c oxidoreductase (cytochrome b-c1 complex, complex III, CIII) and cytochrome c oxidase (complex IV, CIV), that cooperate to transfer electrons derived from NADH and succinate to molecular oxygen, creating an electrochemical gradient over the inner membrane that drives transmembrane transport and the ATP synthase. Cytochrome c oxidase is the component of the respiratory chain that catalyzes the reduction of oxygen to water. Electrons originating from reduced cytochrome c in the intermembrane space (IMS) are transferred via the dinuclear copper A center (CU(A)) of subunit 2 and heme A of subunit 1 to the active site in subunit 1, a binuclear center (BNC) formed by heme A3 and copper B (CU(B)). The BNC reduces molecular oxygen to 2 water molecules using 4 electrons from cytochrome c in the IMS and 4 protons from the mitochondrial matrix. The chain is Cytochrome c oxidase subunit 3 (cox3) from Schizosaccharomyces pombe (strain 972 / ATCC 24843) (Fission yeast).